The sequence spans 338 residues: Glycerol-3-phosphate dehydrogenase [NAD(P)+] (338 aa).

NADPH-binding residues include Ser13, Trp14, and Lys108. Sn-glycerol 3-phosphate contacts are provided by Lys108, Gly139, and Ser141. NADPH is bound at residue Ala143. 5 residues coordinate sn-glycerol 3-phosphate: Lys194, Asp247, Ser257, Arg258, and Asn259. The active-site Proton acceptor is the Lys194. Arg258 contacts NADPH. NADPH-binding residues include Val282 and Glu284.

This sequence belongs to the NAD-dependent glycerol-3-phosphate dehydrogenase family.

It localises to the cytoplasm. The enzyme catalyses sn-glycerol 3-phosphate + NAD(+) = dihydroxyacetone phosphate + NADH + H(+). It carries out the reaction sn-glycerol 3-phosphate + NADP(+) = dihydroxyacetone phosphate + NADPH + H(+). It participates in membrane lipid metabolism; glycerophospholipid metabolism. Catalyzes the reduction of the glycolytic intermediate dihydroxyacetone phosphate (DHAP) to sn-glycerol 3-phosphate (G3P), the key precursor for phospholipid synthesis. The protein is Glycerol-3-phosphate dehydrogenase [NAD(P)+] of Streptococcus pneumoniae (strain CGSP14).